A 273-amino-acid chain; its full sequence is Dermonecrotic toxin LamSicTox-alphaIC1 (273 aa).

Histidine 5 is an active-site residue. Mg(2+) is bound by residues glutamate 25 and aspartate 27. Histidine 41 functions as the Nucleophile in the catalytic mechanism. 2 disulfide bridges follow: cysteine 45–cysteine 51 and cysteine 47–cysteine 190. Aspartate 85 serves as a coordination point for Mg(2+).

It belongs to the arthropod phospholipase D family. Class II subfamily. Mg(2+) is required as a cofactor. In terms of tissue distribution, expressed by the venom gland.

The protein resides in the secreted. The enzyme catalyses an N-(acyl)-sphingosylphosphocholine = an N-(acyl)-sphingosyl-1,3-cyclic phosphate + choline. It carries out the reaction an N-(acyl)-sphingosylphosphoethanolamine = an N-(acyl)-sphingosyl-1,3-cyclic phosphate + ethanolamine. The catalysed reaction is a 1-acyl-sn-glycero-3-phosphocholine = a 1-acyl-sn-glycero-2,3-cyclic phosphate + choline. It catalyses the reaction a 1-acyl-sn-glycero-3-phosphoethanolamine = a 1-acyl-sn-glycero-2,3-cyclic phosphate + ethanolamine. Dermonecrotic toxins cleave the phosphodiester linkage between the phosphate and headgroup of certain phospholipids (sphingolipid and lysolipid substrates), forming an alcohol (often choline) and a cyclic phosphate. This toxin acts on sphingomyelin (SM). It may also act on ceramide phosphoethanolamine (CPE), lysophosphatidylcholine (LPC) and lysophosphatidylethanolamine (LPE), but not on lysophosphatidylserine (LPS), and lysophosphatidylglycerol (LPG). It acts by transphosphatidylation, releasing exclusively cyclic phosphate products as second products. Induces dermonecrosis, hemolysis, increased vascular permeability, edema, inflammatory response, and platelet aggregation. The chain is Dermonecrotic toxin LamSicTox-alphaIC1 from Loxosceles amazonica (Recluse spider).